We begin with the raw amino-acid sequence, 540 residues long: Kinesin light chain (540 aa).

The stretch at 34 to 138 (LETSVKGVKE…NKHLKYMASI (105 aa)) forms a coiled coil. 6 TPR repeats span residues 206 to 239 (LRTL…LEKT), 248 to 281 (ATML…REKC), 290 to 323 (AATL…REKV), 332 to 365 (AKQL…YESK), 374 to 407 (AKTK…AHER), and 456 to 489 (TTTL…KKQH).

Belongs to the kinesin light chain family. Oligomeric complex composed of two heavy chains and two light chains. Interacts with unc-83; the interaction is direct. Interacts with unc-33; the interaction regulates unc-33 neurite localization. Interacts with casy-1.

It is found in the cytoplasm. The protein localises to the cytoskeleton. It localises to the nucleus envelope. Functionally, kinesin is a microtubule-associated force-producing protein that may play a role in organelle transport. The light chain may function in coupling of cargo to the heavy chain or in the modulation of its ATPase activity. Recruits unc-83 (within the unc-83-unc-84 LINC complex) to the nuclear envelope during nuclear migration to mediate the link between the nuclear envelope and the microtubule cytoskeleton in hypodermal precursor cells. The polypeptide is Kinesin light chain (Caenorhabditis elegans).